We begin with the raw amino-acid sequence, 48 residues long: 2-deoxy-glucose resistant protein 1, mitochondrial (48 aa).

The N-terminal 28 residues, 1 to 28 (MQVGFVSQTNCRSFPACIVFLFQMSQRQ), are a transit peptide targeting the mitochondrion.

It is found in the mitochondrion. The sequence is that of 2-deoxy-glucose resistant protein 1, mitochondrial (DGR1) from Saccharomyces cerevisiae (strain ATCC 204508 / S288c) (Baker's yeast).